The chain runs to 140 residues: Nucleoside diphosphate kinase (140 aa).

Positions 11, 59, 87, 93, 104, and 114 each coordinate ATP. Catalysis depends on H117, which acts as the Pros-phosphohistidine intermediate.

It belongs to the NDK family. Homotetramer. Requires Mg(2+) as cofactor.

Its subcellular location is the cytoplasm. It carries out the reaction a 2'-deoxyribonucleoside 5'-diphosphate + ATP = a 2'-deoxyribonucleoside 5'-triphosphate + ADP. The enzyme catalyses a ribonucleoside 5'-diphosphate + ATP = a ribonucleoside 5'-triphosphate + ADP. Its function is as follows. Major role in the synthesis of nucleoside triphosphates other than ATP. The ATP gamma phosphate is transferred to the NDP beta phosphate via a ping-pong mechanism, using a phosphorylated active-site intermediate. This Xanthobacter autotrophicus (strain ATCC BAA-1158 / Py2) protein is Nucleoside diphosphate kinase.